A 763-amino-acid chain; its full sequence is MWRLVAESAAGGTYHFLTGTDYVVGRKNCAILIPEDQSISRCHATLSVSHPSANLGQTNAASVLSIKDSSKYGTTVNGDKMNPAVPRNLKSGDKVTFGVFNSKYRVEYEPLVVCSSCLDNSEKNSLNQNLIHLGGHVLNNWTEKSTHLVMTSIKVTIKTICALICCKPIIKPDYFCELLHAIQEKRPLPDYRSFIPSVDEPSLTPESLDLSENVKRKSIFKDKVFLFLNAKQYKKLSPAVLFGGGKTDLLMGELKDASVLDNPATCVIDVAMTESQLSESQSTQPWITSTLDLLQSKGLRTIPEAEIGLAVINVSTEIYCNPRRRAASGTEAGTSKKMNVLSSTLCQGIAVDETILPAPTLDITAYAANTEPQDQTGTSWMNISGVREVKETPGNSSSHSRSKGCLQKDPKSGSSSNDLRQTLFREDETDTRKNTPSLLPTKSSARDVTKTSQKLQPTKKIDSYFQSLAKKRDRAEDEKEASSSKLPRVETLSSQTLEEKFPPVTQTLEEENFDSDLDMELAMSCDQILNDSMGSKAAMPEDSTVKKRKVPDDHVVEESDVDSDEGIRANAEQNDTKSDINVTKRRKVDSEIEGTKEPTIKPREIGTKAQVKTNSPEMAPAIRKEIEVKKELDIKKEPKSQWEESKFVPDLQGETDALPSRLLLTEFKSLVVSRPVRNNNATSNSSNGKCHNFKKFKKVAYPGAGSFPNIIGGSDLIAHDRKKNAELEQWLRQEVEEQTQQVREESLAEDLFRYNPKPSKRRR.

Residues 22–81 form the FHA domain; sequence YVVGRKNCAILIPEDQSISRCHATLSVSHPSANLGQTNAASVLSIKDSSKYGTTVNGDKM. 2 BRCT domains span residues 102-179 and 215-324; these read SKYR…CELL and KRKS…NPRR. Disordered stretches follow at residues 389–496, 535–593, and 738–763; these read VKET…SSQT, SKAA…SEIE, and QTQQ…KRRR. A compositionally biased stretch (basic and acidic residues) spans 423–433; sequence LFREDETDTRK. The span at 434–443 shows a compositional bias: polar residues; it reads NTPSLLPTKS. The Nuclear localization signal motif lies at 469 to 474; sequence AKKRDR. Positions 473-482 are enriched in basic and acidic residues; it reads DRAEDEKEAS. Basic and acidic residues predominate over residues 742–752; it reads VREESLAEDLF. The FxF/Y motif motif lies at 748 to 757; the sequence is AEDLFRYNPK.

It belongs to the Nibrin family. In terms of assembly, component of the MRN complex composed of two heterodimers rad50 and mre11 associated with a single nbn.

It localises to the nucleus. The protein localises to the chromosome. It is found in the PML body. The protein resides in the telomere. Its function is as follows. Component of the MRN complex, which plays a central role in double-strand break (DSB) repair, DNA recombination, maintenance of telomere integrity and meiosis. The MRN complex is involved in the repair of DNA double-strand breaks (DSBs) via homologous recombination (HR), an error-free mechanism which primarily occurs during S and G2 phases. The complex (1) mediates the end resection of damaged DNA, which generates proper single-stranded DNA, a key initial steps in HR, and is (2) required for the recruitment of other repair factors and efficient activation of ATM and ATR upon DNA damage. The MRN complex possesses single-strand endonuclease activity and double-strand-specific 3'-5' exonuclease activity, which are provided by MRE11, to initiate end resection, which is required for single-strand invasion and recombination. Within the MRN complex, nbn acts as a protein-protein adapter, which specifically recognizes and binds phosphorylated proteins, promoting their recruitment to DNA damage sites. Recruits mre11 and rad50 components of the MRN complex to DSBs in response to DNA damage. Promotes the recruitment of PI3/PI4-kinase family members atm, atr, and probably DNA-PKcs to the DNA damage sites, activating their functions. Mediates the recruitment of phosphorylated rbbp8/CtIP to DSBs, leading to cooperation between the MRN complex and rbbp8/CtIP to initiate end resection. The MRN complex promotes recruitment of topbp1 to DNA damage sites. The MRN complex and rbbp8/CtIP are also required for chromosome alignment during metaphase. This Xenopus laevis (African clawed frog) protein is Nibrin.